The following is a 348-amino-acid chain: Probable dual-specificity RNA methyltransferase RlmN (348 aa).

Residue E89 is the Proton acceptor of the active site. A Radical SAM core domain is found at 95–328 (HKNRNTVCVS…VTLRISYGSR (234 aa)). The cysteines at positions 102 and 333 are disulfide-linked. Residues C109, C113, and C116 each contribute to the [4Fe-4S] cluster site. Residues 159–160 (GE), S191, 214–216 (SLH), and N290 each bind S-adenosyl-L-methionine. C333 (S-methylcysteine intermediate) is an active-site residue.

This sequence belongs to the radical SAM superfamily. RlmN family. [4Fe-4S] cluster is required as a cofactor.

The protein resides in the cytoplasm. It catalyses the reaction adenosine(2503) in 23S rRNA + 2 reduced [2Fe-2S]-[ferredoxin] + 2 S-adenosyl-L-methionine = 2-methyladenosine(2503) in 23S rRNA + 5'-deoxyadenosine + L-methionine + 2 oxidized [2Fe-2S]-[ferredoxin] + S-adenosyl-L-homocysteine. The enzyme catalyses adenosine(37) in tRNA + 2 reduced [2Fe-2S]-[ferredoxin] + 2 S-adenosyl-L-methionine = 2-methyladenosine(37) in tRNA + 5'-deoxyadenosine + L-methionine + 2 oxidized [2Fe-2S]-[ferredoxin] + S-adenosyl-L-homocysteine. In terms of biological role, specifically methylates position 2 of adenine 2503 in 23S rRNA and position 2 of adenine 37 in tRNAs. The protein is Probable dual-specificity RNA methyltransferase RlmN of Dictyoglomus thermophilum (strain ATCC 35947 / DSM 3960 / H-6-12).